Consider the following 419-residue polypeptide: Putative competence-damage inducible protein (419 aa).

Belongs to the CinA family.

The chain is Putative competence-damage inducible protein from Lysinibacillus sphaericus (strain C3-41).